Reading from the N-terminus, the 139-residue chain is Natriuretic peptides A (139 aa).

A signal peptide spans 1–21 (MTALVLWGLLLLLGQHTQVNS). A propeptide spanning residues 22-114 (HVLGRPFSAS…QDLLMSLRKR (93 aa)) is cleaved from the precursor. A disulfide bond links C118 and C134.

This sequence belongs to the natriuretic peptide family.

It is found in the secreted. Hormone playing a key role in cardiovascular homeostasis through regulation of natriuresis, diuresis, and vasodilation. Has a cGMP-stimulating activity. The chain is Natriuretic peptides A (nppa) from Takifugu rubripes (Japanese pufferfish).